A 456-amino-acid chain; its full sequence is tRNA modification GTPase MnmE (456 aa).

Residues Arg-24, Glu-81, and Lys-120 each coordinate (6S)-5-formyl-5,6,7,8-tetrahydrofolate. The region spanning 216-379 (GMTVVIAGRP…LRDHLKGCMG (164 aa)) is the TrmE-type G domain. A K(+)-binding site is contributed by Asn-226. Residues 226 to 231 (NAGKSS), 245 to 251 (TDIAGTT), 270 to 273 (DTAG), and 335 to 338 (NKAD) contribute to the GTP site. Mg(2+) is bound at residue Ser-230. Thr-245, Ile-247, and Thr-250 together coordinate K(+). Thr-251 contributes to the Mg(2+) binding site. Lys-456 is a binding site for (6S)-5-formyl-5,6,7,8-tetrahydrofolate.

It belongs to the TRAFAC class TrmE-Era-EngA-EngB-Septin-like GTPase superfamily. TrmE GTPase family. Homodimer. Heterotetramer of two MnmE and two MnmG subunits. The cofactor is K(+).

Its subcellular location is the cytoplasm. In terms of biological role, exhibits a very high intrinsic GTPase hydrolysis rate. Involved in the addition of a carboxymethylaminomethyl (cmnm) group at the wobble position (U34) of certain tRNAs, forming tRNA-cmnm(5)s(2)U34. The protein is tRNA modification GTPase MnmE of Pseudomonas putida (strain ATCC 47054 / DSM 6125 / CFBP 8728 / NCIMB 11950 / KT2440).